The sequence spans 1486 residues: Chromosome partition protein MukB (1486 aa).

34–41 (GGNGAGKS) contacts ATP. Coiled-coil stretches lie at residues 326–418 (LEAD…QYNQ), 444–480 (LETF…QAYQ), and 509–603 (RHLA…RAPV). Residues 666–783 (PGGSEDQRLN…EVPLFGRAAR (118 aa)) are flexible hinge. Coiled coils occupy residues 835-923 (EAEI…AKLE), 977-1115 (EMLS…TAKA), and 1209-1266 (VEAI…QNVS).

This sequence belongs to the SMC family. MukB subfamily. As to quaternary structure, homodimerization via its hinge domain. Binds to DNA via its C-terminal region. Interacts, and probably forms a ternary complex, with MukE and MukF via its C-terminal region. The complex formation is stimulated by calcium or magnesium. Interacts with tubulin-related protein FtsZ.

It is found in the cytoplasm. Its subcellular location is the nucleoid. Its function is as follows. Plays a central role in chromosome condensation, segregation and cell cycle progression. Functions as a homodimer, which is essential for chromosome partition. Involved in negative DNA supercoiling in vivo, and by this means organize and compact chromosomes. May achieve or facilitate chromosome segregation by condensation DNA from both sides of a centrally located replisome during cell division. This is Chromosome partition protein MukB from Escherichia coli O9:H4 (strain HS).